The following is a 1371-amino-acid chain: DNA-directed RNA polymerase subunit beta (1371 aa).

Belongs to the RNA polymerase beta chain family. As to quaternary structure, the RNAP catalytic core consists of 2 alpha, 1 beta, 1 beta' and 1 omega subunit. When a sigma factor is associated with the core the holoenzyme is formed, which can initiate transcription.

It catalyses the reaction RNA(n) + a ribonucleoside 5'-triphosphate = RNA(n+1) + diphosphate. Its function is as follows. DNA-dependent RNA polymerase catalyzes the transcription of DNA into RNA using the four ribonucleoside triphosphates as substrates. In Citrifermentans bemidjiense (strain ATCC BAA-1014 / DSM 16622 / JCM 12645 / Bem) (Geobacter bemidjiensis), this protein is DNA-directed RNA polymerase subunit beta.